The following is a 138-amino-acid chain: Large ribosomal subunit protein uL16 (138 aa).

This sequence belongs to the universal ribosomal protein uL16 family. In terms of assembly, part of the 50S ribosomal subunit.

Binds 23S rRNA and is also seen to make contacts with the A and possibly P site tRNAs. The sequence is that of Large ribosomal subunit protein uL16 from Ureaplasma urealyticum serovar 10 (strain ATCC 33699 / Western).